The chain runs to 814 residues: Putative E3 ubiquitin-protein ligase RF298 (814 aa).

Disordered regions lie at residues 1–51, 221–301, and 411–441; these read MVEK…ASLT, SVSN…TKSA, and ALPA…STKP. Low complexity predominate over residues 221–231; it reads SVSNASKSSES. The segment covering 289–301 has biased composition (polar residues); the sequence is SVSTASGEGTKSA. Residues 423-435 show a composition bias toward basic and acidic residues; the sequence is SEKKSGSEPEEKP. A coiled-coil region spans residues 506–710; it reads ELKALRKEKE…KLKSDSLKIA (205 aa). An RING-type zinc finger spans residues 760–800; it reads CVMCLSEEMSVIFLPCAHQVLCSKCNQLHEKEAMEDCPSCR.

The protein belongs to the RING-type zinc finger family.

The catalysed reaction is S-ubiquitinyl-[E2 ubiquitin-conjugating enzyme]-L-cysteine + [acceptor protein]-L-lysine = [E2 ubiquitin-conjugating enzyme]-L-cysteine + N(6)-ubiquitinyl-[acceptor protein]-L-lysine.. It functions in the pathway protein modification; protein ubiquitination. This chain is Putative E3 ubiquitin-protein ligase RF298 (RF298), found in Arabidopsis thaliana (Mouse-ear cress).